A 362-amino-acid chain; its full sequence is UDP-N-acetylglucosamine--N-acetylmuramyl-(pentapeptide) pyrophosphoryl-undecaprenol N-acetylglucosamine transferase (362 aa).

UDP-N-acetyl-alpha-D-glucosamine-binding positions include 11 to 13, N124, R163, S191, I246, and Q291; that span reads TGG.

The protein belongs to the glycosyltransferase 28 family. MurG subfamily.

It is found in the cell inner membrane. It carries out the reaction di-trans,octa-cis-undecaprenyl diphospho-N-acetyl-alpha-D-muramoyl-L-alanyl-D-glutamyl-meso-2,6-diaminopimeloyl-D-alanyl-D-alanine + UDP-N-acetyl-alpha-D-glucosamine = di-trans,octa-cis-undecaprenyl diphospho-[N-acetyl-alpha-D-glucosaminyl-(1-&gt;4)]-N-acetyl-alpha-D-muramoyl-L-alanyl-D-glutamyl-meso-2,6-diaminopimeloyl-D-alanyl-D-alanine + UDP + H(+). It functions in the pathway cell wall biogenesis; peptidoglycan biosynthesis. Its function is as follows. Cell wall formation. Catalyzes the transfer of a GlcNAc subunit on undecaprenyl-pyrophosphoryl-MurNAc-pentapeptide (lipid intermediate I) to form undecaprenyl-pyrophosphoryl-MurNAc-(pentapeptide)GlcNAc (lipid intermediate II). This chain is UDP-N-acetylglucosamine--N-acetylmuramyl-(pentapeptide) pyrophosphoryl-undecaprenol N-acetylglucosamine transferase, found in Idiomarina loihiensis (strain ATCC BAA-735 / DSM 15497 / L2-TR).